Reading from the N-terminus, the 331-residue chain is Lipoyl synthase (331 aa).

The disordered stretch occupies residues 1 to 20; it reads MTTETNPAVTPAYNPSEKQK. [4Fe-4S] cluster-binding residues include Cys71, Cys76, Cys82, Cys97, Cys101, Cys104, and Ser311. The Radical SAM core domain occupies 82–300; the sequence is CFGKGTATFM…EEEAYKMGFA (219 aa).

The protein belongs to the radical SAM superfamily. Lipoyl synthase family. Requires [4Fe-4S] cluster as cofactor.

It localises to the cytoplasm. The catalysed reaction is [[Fe-S] cluster scaffold protein carrying a second [4Fe-4S](2+) cluster] + N(6)-octanoyl-L-lysyl-[protein] + 2 oxidized [2Fe-2S]-[ferredoxin] + 2 S-adenosyl-L-methionine + 4 H(+) = [[Fe-S] cluster scaffold protein] + N(6)-[(R)-dihydrolipoyl]-L-lysyl-[protein] + 4 Fe(3+) + 2 hydrogen sulfide + 2 5'-deoxyadenosine + 2 L-methionine + 2 reduced [2Fe-2S]-[ferredoxin]. The protein operates within protein modification; protein lipoylation via endogenous pathway; protein N(6)-(lipoyl)lysine from octanoyl-[acyl-carrier-protein]: step 2/2. Its function is as follows. Catalyzes the radical-mediated insertion of two sulfur atoms into the C-6 and C-8 positions of the octanoyl moiety bound to the lipoyl domains of lipoate-dependent enzymes, thereby converting the octanoylated domains into lipoylated derivatives. In Janthinobacterium sp. (strain Marseille) (Minibacterium massiliensis), this protein is Lipoyl synthase.